The chain runs to 792 residues: Phenylalanine--tRNA ligase beta subunit (792 aa).

The 109-residue stretch at Gly-39 to Ala-147 folds into the tRNA-binding domain. In terms of domain architecture, B5 spans Pro-400–Thr-475. Positions 453, 459, 462, and 463 each coordinate Mg(2+). In terms of domain architecture, FDX-ACB spans Ser-698–Arg-791.

Belongs to the phenylalanyl-tRNA synthetase beta subunit family. Type 1 subfamily. In terms of assembly, tetramer of two alpha and two beta subunits. Requires Mg(2+) as cofactor.

The protein localises to the cytoplasm. The catalysed reaction is tRNA(Phe) + L-phenylalanine + ATP = L-phenylalanyl-tRNA(Phe) + AMP + diphosphate + H(+). The sequence is that of Phenylalanine--tRNA ligase beta subunit from Xanthomonas euvesicatoria pv. vesicatoria (strain 85-10) (Xanthomonas campestris pv. vesicatoria).